Here is a 391-residue protein sequence, read N- to C-terminus: Methionine import ATP-binding protein MetN 2 (391 aa).

Positions 44–280 (VHVGKVFATP…PRHGATRALL (237 aa)) constitute an ABC transporter domain. 77–84 (GRSGAGKS) is an ATP binding site.

The protein belongs to the ABC transporter superfamily. Methionine importer (TC 3.A.1.24) family. As to quaternary structure, the complex is composed of two ATP-binding proteins (MetN), two transmembrane proteins (MetI) and a solute-binding protein (MetQ).

It is found in the cell inner membrane. The catalysed reaction is L-methionine(out) + ATP + H2O = L-methionine(in) + ADP + phosphate + H(+). It carries out the reaction D-methionine(out) + ATP + H2O = D-methionine(in) + ADP + phosphate + H(+). Part of the ABC transporter complex MetNIQ involved in methionine import. Responsible for energy coupling to the transport system. This chain is Methionine import ATP-binding protein MetN 2, found in Burkholderia ambifaria (strain ATCC BAA-244 / DSM 16087 / CCUG 44356 / LMG 19182 / AMMD) (Burkholderia cepacia (strain AMMD)).